The following is a 326-amino-acid chain: Toluene-4-monooxygenase system, ferredoxin--NAD(+) reductase component (326 aa).

The region spanning 1–92 (MFNIQSDDLL…DLKIKVINRA (92 aa)) is the 2Fe-2S ferredoxin-type domain. Residues C36, C41, C44, and C76 each contribute to the [2Fe-2S] cluster site. The segment at 95–326 (RASHPPKRFS…FEAIHFDRFF (232 aa)) is ferredoxin-reductase. Residues 100–195 (PKRFSTRVVS…DGPYGLSVLK (96 aa)) enclose the FAD-binding FR-type domain. FAD is bound by residues 146-149 (RAYS), 162-164 (IVK), and 170-172 (KVS).

It belongs to the bacterial ring-hydroxylating dioxygenase ferredoxin reductase family. In terms of assembly, monomer. The alkene monooxygenase multicomponent enzyme system is composed of an electron transfer component and a monooxygenase component interacting with the effector protein TmoD. The electron transfer component is composed of a ferredoxin reductase (TmoF) and a ferredoxin (TmoC), and the monooxygenase component is formed by a heterohexamer (dimer of heterotrimers) of two alpha subunits (TmoA), two beta subunits (TmoE) and two gamma subunits (TmoB). FAD is required as a cofactor. The cofactor is [2Fe-2S] cluster.

The enzyme catalyses 2 reduced [2Fe-2S]-[ferredoxin] + NAD(+) + H(+) = 2 oxidized [2Fe-2S]-[ferredoxin] + NADH. It functions in the pathway xenobiotic degradation; toluene degradation. Its function is as follows. Reductase component of the toluene-4-monooxygenase multicomponent enzyme system which catalyzes the O2- and NADH-dependent hydroxylation of toluene to form p-cresol. Ferredoxin reductase catalyzes the transfer of electrons from NADH to ferredoxin (TmoC). The chain is Toluene-4-monooxygenase system, ferredoxin--NAD(+) reductase component from Ectopseudomonas mendocina (Pseudomonas mendocina).